A 4481-amino-acid polypeptide reads, in one-letter code: Dynein axonemal heavy chain 17 (4481 aa).

The stem stretch occupies residues 1 to 1792 (MPDLRIDYLE…FANICDAQIK (1792 aa)). The Kelch 1 repeat unit spans residues 521–569 (LLYMCGGLLERPLILVEVVPRYSVMLEMFNTELDNAKLMYDAQMAASAD). A coiled-coil region spans residues 759 to 826 (ENVMEYIQEM…GRVANLNKRY (68 aa)). 2 TPR repeats span residues 1533–1566 (VVEA…YLET) and 1688–1722 (IWWT…QLNA). AAA regions lie at residues 1793-2014 (YSYE…VLVV), 2074-2295 (KIIK…IGFK), 2401-2649 (ELDP…IFQG), and 2747-2996 (SYNE…ERRY). ATP-binding positions include 1831 to 1838 (GPAGTGKT) and 2112 to 2119 (GNAGSGKS). One copy of the Kelch 2 repeat lies at 2229-2275 (ISHLRTATPATVSRAGILYINPADLGWNPVVSSWIERRKVQSEKANL). ATP-binding positions include 2439-2446 (GNAGTGKS) and 2785-2792 (GVGGSGKQ). The stretch at 2782 to 2834 (LLVGVGGSGKQSLSRLAAYISALDVFQITLKKGYAIPDLKMDLATQYIKSAVK) is one Kelch 3 repeat. Coiled-coil stretches lie at residues 3011–3071 (YQNL…IQVV) and 3241–3293 (DVAP…EKIK). Positions 3011–3297 (YQNLLAKKRM…TAEKIKCQQE (287 aa)) are stalk. AAA regions lie at residues 3389-3616 (LTDD…EIEE) and 3826-4059 (VKNF…VLYN). One copy of the TPR 3 repeat lies at 4138–4173 (PESPYLYGLHPNAEIGFLTVTSEKLFRTVLEMQPKE). Kelch repeat units follow at residues 4272–4321 (NLGL…DLLQ) and 4339–4385 (VWLA…DMTA).

It belongs to the dynein heavy chain family. In terms of assembly, consists of at least two heavy chains and a number of intermediate and light chains.

The protein localises to the cytoplasm. It localises to the cytoskeleton. The protein resides in the flagellum axoneme. Force generating protein component of the outer dynein arms (ODAs) in the sperm flagellum. Produces force towards the minus ends of microtubules. Dynein has ATPase activity; the force-producing power stroke is thought to occur on release of ADP. Plays a major role in sperm motility, implicated in sperm flagellar assembly and beating. The sequence is that of Dynein axonemal heavy chain 17 from Mus musculus (Mouse).